We begin with the raw amino-acid sequence, 99 residues long: MALALSDVKRIAHLARIETSDAEAEQTLAQLNNFFSLVEQMQAVDTTGIEPLAHPLSAVRDIAQRLREDAVTESDRRADYQRPAPATENGLYLVPKVIE.

This sequence belongs to the GatC family. Heterotrimer of A, B and C subunits.

The enzyme catalyses L-glutamyl-tRNA(Gln) + L-glutamine + ATP + H2O = L-glutaminyl-tRNA(Gln) + L-glutamate + ADP + phosphate + H(+). The catalysed reaction is L-aspartyl-tRNA(Asn) + L-glutamine + ATP + H2O = L-asparaginyl-tRNA(Asn) + L-glutamate + ADP + phosphate + 2 H(+). Allows the formation of correctly charged Asn-tRNA(Asn) or Gln-tRNA(Gln) through the transamidation of misacylated Asp-tRNA(Asn) or Glu-tRNA(Gln) in organisms which lack either or both of asparaginyl-tRNA or glutaminyl-tRNA synthetases. The reaction takes place in the presence of glutamine and ATP through an activated phospho-Asp-tRNA(Asn) or phospho-Glu-tRNA(Gln). The polypeptide is Aspartyl/glutamyl-tRNA(Asn/Gln) amidotransferase subunit C (Cupriavidus metallidurans (strain ATCC 43123 / DSM 2839 / NBRC 102507 / CH34) (Ralstonia metallidurans)).